A 196-amino-acid chain; its full sequence is Pyridoxal 5'-phosphate synthase subunit PdxT (196 aa).

52–54 (GES) serves as a coordination point for L-glutamine. C84 serves as the catalytic Nucleophile. L-glutamine contacts are provided by residues R113 and 141–142 (IR). Residues H178 and E180 each act as charge relay system in the active site.

The protein belongs to the glutaminase PdxT/SNO family. As to quaternary structure, in the presence of PdxS, forms a dodecamer of heterodimers. Only shows activity in the heterodimer.

It catalyses the reaction aldehydo-D-ribose 5-phosphate + D-glyceraldehyde 3-phosphate + L-glutamine = pyridoxal 5'-phosphate + L-glutamate + phosphate + 3 H2O + H(+). The catalysed reaction is L-glutamine + H2O = L-glutamate + NH4(+). The protein operates within cofactor biosynthesis; pyridoxal 5'-phosphate biosynthesis. In terms of biological role, catalyzes the hydrolysis of glutamine to glutamate and ammonia as part of the biosynthesis of pyridoxal 5'-phosphate. The resulting ammonia molecule is channeled to the active site of PdxS. The protein is Pyridoxal 5'-phosphate synthase subunit PdxT of Pyrococcus horikoshii (strain ATCC 700860 / DSM 12428 / JCM 9974 / NBRC 100139 / OT-3).